Reading from the N-terminus, the 668-residue chain is RNA-binding protein PIN4 (668 aa).

The segment at 1–77 (METSSFENAP…NLNNAPTNGA (77 aa)) is disordered. The span at 8 to 23 (NAPPAAINDAQDNNIN) shows a compositional bias: low complexity. The segment covering 24–36 (TETNDQETNQQSI) has biased composition (polar residues). A compositionally biased stretch (basic and acidic residues) spans 37 to 46 (ETRDAIDKEN). Positions 47-74 (GVQTETGENSAKNAEQNVSSTNLNNAPT) are enriched in polar residues. At Ser56 the chain carries Phosphoserine. The region spanning 85 to 163 (NAIVIKNIPF…RKLKVEYKKM (79 aa)) is the RRM domain. Over residues 168-188 (ERERIEREKREKRGQLEEQHR) the composition is skewed to basic and acidic residues. Residues 168–214 (ERERIEREKREKRGQLEEQHRSSSNLSLDSLSKMSGSGNNNTSNNQL) are disordered. 4 positions are modified to phosphoserine: Ser189, Ser191, Ser194, and Ser197. Low complexity predominate over residues 189–212 (SSSNLSLDSLSKMSGSGNNNTSNN). Thr305 carries the post-translational modification Phosphothreonine. Disordered regions lie at residues 374–398 (QQQG…NRSQ) and 420–570 (VNNS…QRVP). At Ser393 the chain carries Phosphoserine. Low complexity predominate over residues 420 to 449 (VNNSSNSNTINSNNGNGNNVIINNNSASST). The segment covering 450–478 (PKISSQGQFSMQPTLTSPKMNIHHSSQYN) has biased composition (polar residues). Phosphoserine is present on Ser466. Residues 479–508 (SADQPQQPQPQTQQNVQSAAQQQQSFLRQQ) show a composition bias toward low complexity. Residues 509–551 (ATLTPSSRIPSGYSANHYQINSVNPLLRNSQISPPNSQIPINS) show a composition bias toward polar residues. Ser541 carries the phosphoserine modification. The span at 552–567 (QTLSQAQPPAQSQTQQ) shows a compositional bias: low complexity. Ser636, Ser638, Ser640, Ser653, and Ser655 each carry phosphoserine.

In terms of assembly, interacts with RAD53. Post-translationally, hyperphosphorylated in response to DNA damage by MEC1.

It is found in the cytoplasm. In terms of biological role, involved in normal G2/M phase transition of the mitotic cell cycle. In association with RAD53, also involved in checkpoint control in response to DNA damage. The protein is RNA-binding protein PIN4 (PIN4) of Saccharomyces cerevisiae (strain ATCC 204508 / S288c) (Baker's yeast).